The primary structure comprises 511 residues: MKRRALVSVSNKEGIVPFAKALVEHEVEIVSTGGTKRALQEAGIPVTGISDVTGFPEILDGRVKTLHPNIHGGLLAMRERDEHLAQLNEHHIRPIDFVVVNLYPFQQTIAKPEATFADAIENIDIGGPSMLRAAAKNHQHVTVVVDPVDYETVLKELADQGNVATETKRRLAAKVFRHTAAYDAMIAEYLTDAVGEESPESLTVTFEKKQDLRYGENPHQKATFYQKPLGAKASIAHAKQLHGKELSYNNINDADAALSIVKEFKEPAAVAVKHMNPCGVGTGETIKEAFDKAYEADPVSIFGGIIALNREVDVETAKTLKEIFLEIIIAPSFSEEALDVLTSKKNLRLLTLPLNEENQAEKRITSIHGGALVQEEDTYGFEEAEIKIPTKREPTEAEWEALKLAWRVVKHVKSNAIVLADGQMTVGVGAGQMNRVGAAKIAIEQAGEKAAGSVMGSDAFFPMGDTVELAAKAGITAIIQPGGSIRDEESIENADKHGIAMVFTGVRHFKH.

The MGS-like domain occupies 1–145 (MKRRALVSVS…KNHQHVTVVV (145 aa)).

It belongs to the PurH family.

It carries out the reaction (6R)-10-formyltetrahydrofolate + 5-amino-1-(5-phospho-beta-D-ribosyl)imidazole-4-carboxamide = 5-formamido-1-(5-phospho-D-ribosyl)imidazole-4-carboxamide + (6S)-5,6,7,8-tetrahydrofolate. It catalyses the reaction IMP + H2O = 5-formamido-1-(5-phospho-D-ribosyl)imidazole-4-carboxamide. It functions in the pathway purine metabolism; IMP biosynthesis via de novo pathway; 5-formamido-1-(5-phospho-D-ribosyl)imidazole-4-carboxamide from 5-amino-1-(5-phospho-D-ribosyl)imidazole-4-carboxamide (10-formyl THF route): step 1/1. It participates in purine metabolism; IMP biosynthesis via de novo pathway; IMP from 5-formamido-1-(5-phospho-D-ribosyl)imidazole-4-carboxamide: step 1/1. The polypeptide is Bifunctional purine biosynthesis protein PurH (Halalkalibacterium halodurans (strain ATCC BAA-125 / DSM 18197 / FERM 7344 / JCM 9153 / C-125) (Bacillus halodurans)).